Consider the following 72-residue polypeptide: Penaeidin-2d (72 aa).

Residues 1–21 (MRLVVCLVFLASFALVCQGGA) form the signal peptide. Pyrrolidone carboxylic acid is present on glutamine 22. Intrachain disulfides connect cysteine 45/cysteine 59, cysteine 48/cysteine 66, and cysteine 60/cysteine 67. A Lysine amide modification is found at lysine 71.

This sequence belongs to the penaeidin family.

The protein localises to the cytoplasmic granule. Antibacterial and antifungal activity. Presents chitin-binding activity. This is Penaeidin-2d from Penaeus setiferus (Atlantic white shrimp).